Here is a 788-residue protein sequence, read N- to C-terminus: Endonuclease MutS2 (788 aa).

Position 332–339 (332–339 (GPNTGGKT)) interacts with ATP. Residues 713 to 788 (VDLRGMDAEE…GTGVTVVEIK (76 aa)) form the Smr domain.

It belongs to the DNA mismatch repair MutS family. MutS2 subfamily. In terms of assembly, homodimer. Binds to stalled ribosomes, contacting rRNA.

Its function is as follows. Endonuclease that is involved in the suppression of homologous recombination and thus may have a key role in the control of bacterial genetic diversity. Acts as a ribosome collision sensor, splitting the ribosome into its 2 subunits. Detects stalled/collided 70S ribosomes which it binds and splits by an ATP-hydrolysis driven conformational change. Acts upstream of the ribosome quality control system (RQC), a ribosome-associated complex that mediates the extraction of incompletely synthesized nascent chains from stalled ribosomes and their subsequent degradation. Probably generates substrates for RQC. The polypeptide is Endonuclease MutS2 (Clostridium botulinum (strain 657 / Type Ba4)).